A 118-amino-acid chain; its full sequence is uncharacterized protein (118 aa).

This sequence to E.coli YeaO.

This is an uncharacterized protein from Mycobacterium bovis (strain ATCC BAA-935 / AF2122/97).